Consider the following 305-residue polypeptide: Plant-type L-asparaginase (305 aa).

T175 serves as the catalytic Nucleophile. Substrate contacts are provided by residues 202 to 205 (RVGD) and 224 to 227 (TGLG).

It belongs to the Ntn-hydrolase family. As to quaternary structure, heterotetramer of two alpha and two beta chains arranged as a dimer of alpha/beta heterodimers. The uncleaved protein forms homodimers. Autocleaved. Generates the alpha and beta subunits. The N-terminal residue of the beta subunit is thought to be responsible for the nucleophile hydrolase activity.

The catalysed reaction is L-asparagine + H2O = L-aspartate + NH4(+). Its function is as follows. Catalyzes the hydrolysis of L-asparagine into L-aspartate and ammonia. Does not exhibit glutaminase activity. In Pyrococcus abyssi (strain GE5 / Orsay), this protein is Plant-type L-asparaginase.